The following is an 82-amino-acid chain: RNA-binding protein Hfq (82 aa).

In terms of domain architecture, Sm spans 10-69 (DPFLNALRREHVPVSIYLVNGIKLQGQIESFDQYVVLLRNTVTQMVYKHAISTIVPGRAV).

This sequence belongs to the Hfq family. Homohexamer.

Its function is as follows. RNA chaperone that binds small regulatory RNA (sRNAs) and mRNAs to facilitate mRNA translational regulation in response to envelope stress, environmental stress and changes in metabolite concentrations. Also binds with high specificity to tRNAs. This is RNA-binding protein Hfq from Albidiferax ferrireducens (strain ATCC BAA-621 / DSM 15236 / T118) (Rhodoferax ferrireducens).